A 538-amino-acid chain; its full sequence is Putative cysteine ligase BshC (538 aa).

The stretch at Lys460–Leu484 forms a coiled coil.

Belongs to the BshC family.

Involved in bacillithiol (BSH) biosynthesis. May catalyze the last step of the pathway, the addition of cysteine to glucosamine malate (GlcN-Mal) to generate BSH. The polypeptide is Putative cysteine ligase BshC (Bacillus cereus (strain AH187)).